We begin with the raw amino-acid sequence, 255 residues long: Dehydrogenase/reductase SDR family member 11 (255 aa).

The N-terminal stretch at 1–23 is a signal peptide; it reads MERWTGRVALVTGASVGIGAAVA. NADP(+) is bound by residues 13–18, 38–39, glutamate 44, 65–66, and asparagine 92; these read GASVGI, RS, and DL. Substrate contacts are provided by serine 146 and tyrosine 161. NADP(+) contacts are provided by residues tyrosine 161, lysine 165, 196–199, and lysine 203; that span reads VETG. The Proton acceptor role is filled by tyrosine 161.

Belongs to the short-chain dehydrogenases/reductases (SDR) family.

It localises to the secreted. It catalyses the reaction a 3beta-hydroxysteroid + NADP(+) = a 3-oxosteroid + NADPH + H(+). The enzyme catalyses 17beta-estradiol + NAD(+) = estrone + NADH + H(+). The catalysed reaction is 17beta-estradiol + NADP(+) = estrone + NADPH + H(+). It functions in the pathway steroid biosynthesis; estrogen biosynthesis. With respect to regulation, inhibited by flavonoids including apigenin, luteolin, genistein, kaempferol and quercetin and also by carbenoxolone, zearalenone, glycyrrhetinic, curcumin and flufenamic acid. Its function is as follows. Catalyzes the conversion of the 17-keto group of estrone, 4- and 5-androstenes and 5-alpha-androstanes into their 17-beta-hydroxyl metabolites and the conversion of the 3-keto group of 3-, 3,17- and 3,20- diketosteroids into their 3-hydroxyl metabolites. Exhibits reductive 3-beta-hydroxysteroid dehydrogenase activity toward 5-beta-androstanes, 5-beta-pregnanes, 4-pregnenes and bile acids. May also reduce endogenous and exogenous alpha-dicarbonyl compounds and xenobiotic alicyclic ketones. The sequence is that of Dehydrogenase/reductase SDR family member 11 (DHRS11) from Gallus gallus (Chicken).